Here is a 396-residue protein sequence, read N- to C-terminus: MKMLLLCVFSALALTNDALVRIPLKKFRSIRRQLTDSGKRAEELLADHHSLKYNLSFPASNAPTPETLKNYLDAQYYGEIGLGTPPQPFTVVFDTGSSNLWVPSIHCSLLDIACLLHHKYNSGKSSTYVKNGTAFAIQYGSGSLSGYLSQDTCTIGDLAIDSQLFGEAIKQPGVAFIAAKFDGILGMAYPRISVDGVAPVFDNIMSQKKVEQNVFSFYLNRNPDTEPGGELLLGGTDPKYYTGDFNYVNVTRQAYWQIRVDSMAVGDQLSLCTGGCEAIVDSGTSLITGPSVEVKALQKAIGAFPLIQGEYMVNCDTVPSLPVISFTVGGQVYTLTGEQYILKVTQAGKTMCLSGFMGLDIPAPAGPLWILGDVFMGQYYTVFDRDANRVGFAKAK.

The signal sequence occupies residues Met1–Ala18. A propeptide spans Leu19–Asn61 (activation peptide). The region spanning Tyr76–Ala393 is the Peptidase A1 domain. Residue Asp94 is part of the active site. Residues Cys107 and Cys114 are joined by a disulfide bond. Asn131 and Asn249 each carry an N-linked (GlcNAc...) asparagine glycan. Cys272 and Cys276 are oxidised to a cystine. The active site involves Asp281. A disulfide bond links Cys315 and Cys352.

It belongs to the peptidase A1 family. Monomer.

It is found in the lysosome. The catalysed reaction is Specificity similar to, but narrower than, that of pepsin A. Does not cleave the 4-Gln-|-His-5 bond in B chain of insulin.. Its activity is regulated as follows. Inhibited by pepstatin. Functionally, acid protease active in intracellular protein breakdown. The polypeptide is Cathepsin D (ctsd) (Chionodraco hamatus (Antarctic teleost icefish)).